Consider the following 248-residue polypeptide: Type III pantothenate kinase (248 aa).

6 to 13 (DCGNSFIK) contacts ATP. Substrate contacts are provided by residues Tyr92 and 99–102 (GLDR). Catalysis depends on Asp101, which acts as the Proton acceptor. Asp121 serves as a coordination point for K(+). Thr124 provides a ligand contact to ATP. Thr180 is a binding site for substrate.

It belongs to the type III pantothenate kinase family. Homodimer. Requires NH4(+) as cofactor. K(+) serves as cofactor.

The protein resides in the cytoplasm. It catalyses the reaction (R)-pantothenate + ATP = (R)-4'-phosphopantothenate + ADP + H(+). Its pathway is cofactor biosynthesis; coenzyme A biosynthesis; CoA from (R)-pantothenate: step 1/5. Its function is as follows. Catalyzes the phosphorylation of pantothenate (Pan), the first step in CoA biosynthesis. The polypeptide is Type III pantothenate kinase (Ectopseudomonas mendocina (strain ymp) (Pseudomonas mendocina)).